The following is a 426-amino-acid chain: Histidine--tRNA ligase (426 aa).

It belongs to the class-II aminoacyl-tRNA synthetase family. In terms of assembly, homodimer.

The protein resides in the cytoplasm. The enzyme catalyses tRNA(His) + L-histidine + ATP = L-histidyl-tRNA(His) + AMP + diphosphate + H(+). This chain is Histidine--tRNA ligase, found in Legionella pneumophila (strain Lens).